The primary structure comprises 231 residues: Somatolactin-1 (231 aa).

The N-terminal stretch at 1–24 is a signal peptide; the sequence is MRMIRAIKQGQWAVLLWPYLLTAS. 3 disulfide bridges follow: cysteine 29-cysteine 39, cysteine 89-cysteine 205, and cysteine 222-cysteine 230. Asparagine 145 carries N-linked (GlcNAc...) asparagine glycosylation.

This sequence belongs to the somatotropin/prolactin family. As to expression, pituitary gland.

It localises to the secreted. This is Somatolactin-1 from Sparus aurata (Gilthead sea bream).